The sequence spans 308 residues: Cytochrome b (308 aa).

The next 4 helical transmembrane spans lie at 1–21 (FGSLLGICLATQIITGLLMAM), 45–66 (WLIRNLHANGASMFFICIYLHI), 81–101 (WNTGVILLLTLMATAFVGYVL), and 146–166 (FFALHFLLPFIITGLTLVHLT). Heme b contacts are provided by H51 and H65. Residues H150 and H164 each coordinate heme b. A ubiquinone is bound at residue H169. Transmembrane regions (helical) follow at residues 194–214 (IKDILGFMAMLLPLMSLAMFS), 256–276 (LGGVLALAASVLILFLIPFLH), and 288–308 (LSQLMFWILVANLLILTWVGS).

It belongs to the cytochrome b family. The cytochrome bc1 complex contains 11 subunits: 3 respiratory subunits (MT-CYB, CYC1 and UQCRFS1), 2 core proteins (UQCRC1 and UQCRC2) and 6 low-molecular weight proteins (UQCRH/QCR6, UQCRB/QCR7, UQCRQ/QCR8, UQCR10/QCR9, UQCR11/QCR10 and a cleavage product of UQCRFS1). This cytochrome bc1 complex then forms a dimer. Heme b is required as a cofactor.

It localises to the mitochondrion inner membrane. In terms of biological role, component of the ubiquinol-cytochrome c reductase complex (complex III or cytochrome b-c1 complex) that is part of the mitochondrial respiratory chain. The b-c1 complex mediates electron transfer from ubiquinol to cytochrome c. Contributes to the generation of a proton gradient across the mitochondrial membrane that is then used for ATP synthesis. The chain is Cytochrome b (MT-CYB) from Scytalopus magellanicus (Magellanic tapaculo).